Consider the following 445-residue polypeptide: Putative H/ACA ribonucleoprotein complex subunit 4 (445 aa).

The disordered stretch occupies residues 1–32 (MGKKDKRSKLEGDDLAEAQQKGSFQLPSSNET). The segment covering 20–32 (QKGSFQLPSSNET) has biased composition (polar residues). Asp-113 (nucleophile) is an active-site residue. Positions 284–359 (HKRVVVKDSC…VVAKSKRVIM (76 aa)) constitute a PUA domain. The disordered stretch occupies residues 386–445 (LDKFGKPNDTTPKSWAKEYVQTSTKKEVKKEETPDEEEEEAPKKKSKKSKKQESSDSDSD).

It belongs to the pseudouridine synthase TruB family. Component of the small nucleolar ribonucleoprotein particle containing H/ACA-type snoRNAs (H/ACA snoRNPs).

Its subcellular location is the nucleus. It is found in the nucleolus. It catalyses the reaction a uridine in RNA = a pseudouridine in RNA. Plays a central role in ribosomal RNA processing. Probable catalytic subunit of H/ACA small nucleolar ribonucleoprotein (H/ACA snoRNP) complex, which catalyzes pseudouridylation of rRNA. This involves the isomerization of uridine such that the ribose is subsequently attached to C5, instead of the normal N1. Pseudouridine ('psi') residues may serve to stabilize the conformation of rRNAs. The chain is Putative H/ACA ribonucleoprotein complex subunit 4 from Caenorhabditis elegans.